The chain runs to 118 residues: NADH-quinone oxidoreductase subunit A (118 aa).

3 helical membrane passes run 5–25 (YAFI…PLVL), 62–82 (LYAL…PWAV), and 87–107 (LGLF…IGLV).

The protein belongs to the complex I subunit 3 family. NDH-1 is composed of 14 different subunits. Subunits NuoA, H, J, K, L, M, N constitute the membrane sector of the complex.

The protein localises to the cell membrane. It carries out the reaction a quinone + NADH + 5 H(+)(in) = a quinol + NAD(+) + 4 H(+)(out). NDH-1 shuttles electrons from NADH, via FMN and iron-sulfur (Fe-S) centers, to quinones in the respiratory chain. The immediate electron acceptor for the enzyme in this species is believed to be ubiquinone. Couples the redox reaction to proton translocation (for every two electrons transferred, four hydrogen ions are translocated across the cytoplasmic membrane), and thus conserves the redox energy in a proton gradient. This chain is NADH-quinone oxidoreductase subunit A, found in Herpetosiphon aurantiacus (strain ATCC 23779 / DSM 785 / 114-95).